Here is a 75-residue protein sequence, read N- to C-terminus: DNA-directed RNA polymerase subunit omega (75 aa).

This sequence belongs to the RNA polymerase subunit omega family. As to quaternary structure, the RNAP catalytic core consists of 2 alpha, 1 beta, 1 beta' and 1 omega subunit. When a sigma factor is associated with the core the holoenzyme is formed, which can initiate transcription.

The enzyme catalyses RNA(n) + a ribonucleoside 5'-triphosphate = RNA(n+1) + diphosphate. In terms of biological role, promotes RNA polymerase assembly. Latches the N- and C-terminal regions of the beta' subunit thereby facilitating its interaction with the beta and alpha subunits. In Thermosipho melanesiensis (strain DSM 12029 / CIP 104789 / BI429), this protein is DNA-directed RNA polymerase subunit omega.